Consider the following 337-residue polypeptide: Transcription factor bHLH121 (337 aa).

The 51-residue stretch at 58–108 folds into the bHLH domain; it reads ARKSQKAGREKLRREKLNEHFVELGNVLDPERPKNDKATILTDTVQLLKEL. The tract at residues 235–337 is disordered; sequence VHIPQNPGNR…AGGQKPDDAK (103 aa). 2 stretches are compositionally biased toward basic and acidic residues: residues 244-263 and 280-291; these read RSRE…KAED and SDKDTLQRPEKT. The span at 297–317 shows a compositional bias: low complexity; sequence NNNNNSIEESSHSSKCSSSPS.

In terms of assembly, homodimer. As to expression, expressed constitutively in roots, leaves, stems, and flowers.

The protein resides in the nucleus. This chain is Transcription factor bHLH121 (BHLH121), found in Arabidopsis thaliana (Mouse-ear cress).